Reading from the N-terminus, the 464-residue chain is FERM domain-containing protein 8 (464 aa).

The residue at position 1 (Met-1) is an N-acetylmethionine. Residues 1 to 22 form a disordered region; that stretch reads MDGTEGSAGQPGPAERSHRSSV. Phosphoserine is present on Ser-24. One can recognise an FERM domain in the interval 30–376; that stretch reads ADVLVYLADD…YCIELSQAAE (347 aa). Residues 376–408 form a disordered region; it reads EPAGPQDSATGSPSDPSSSLAPVQRPKLRRQGS. Ser-383, Ser-387, and Ser-408 each carry phosphoserine. Thr-419 bears the Phosphothreonine mark. Ser-439 and Ser-446 each carry phosphoserine.

As to quaternary structure, interacts with iRhom1/RHBDF1 and iRhom2/RHBDF2 (via cytoplasmic N-termini); this interaction leads to mutual protein stabilization. Interacts with ADAM17; this interaction is indirect and mediated by iRhom proteins. Interacts with LRP6; this interaction affects LRP6-binding to AXIN1. As to expression, widely expressed, with high expression in heart and spleen.

The protein resides in the cytoplasm. It is found in the cytosol. The protein localises to the cell membrane. Its function is as follows. Promotes the cell surface stability of iRhom1/RHBDF1 and iRhom2/RHBDF2 and prevents their degradation via the endolysosomal pathway. By acting on iRhoms, involved in ADAM17-mediated shedding of TNF, amphiregulin/AREG, HBEGF and TGFA from the cell surface. Negatively regulates Wnt signaling, possibly by antagonizing the recruitment of AXIN1 to LRP6. The polypeptide is FERM domain-containing protein 8 (FRMD8) (Homo sapiens (Human)).